A 1939-amino-acid chain; its full sequence is Myosin-1 (1939 aa).

A Myosin N-terminal SH3-like domain is found at 33-82 (DAKTSVFVAEPKESFVKGTVQSREGGKVTVKTEAGATLTVKEDQVFPMNP). A phosphothreonine mark is found at Thr-64 and Thr-69. Residues 86–782 (DKIEDMAMMT…LLGLLEEMRD (697 aa)) enclose the Myosin motor domain. Residue Lys-130 is modified to N6,N6,N6-trimethyllysine. 179–186 (GESGAGKT) contacts ATP. At Tyr-389 the chain carries Phosphotyrosine. Thr-419 bears the Phosphothreonine mark. Tyr-424 is subject to Phosphotyrosine. The segment at 659–681 (LNKLMTNLRSTHPHFVRCIIPNE) is actin-binding. His-757 carries the pros-methylhistidine modification. Residues 761 to 775 (KFGHTKVFFKAGLLG) form an actin-binding region. Positions 785 to 814 (LAQLITRTQARCRGFLARVEYQKMVERRES) constitute an IQ domain. A coiled-coil region spans residues 843–1939 (LLKSAETEKE…EVHTKIISEE (1097 aa)). A phosphoserine mark is found at Ser-1092 and Ser-1096. Disordered stretches follow at residues 1125 to 1147 (EIEA…SREL) and 1153 to 1172 (RLEE…KKRE). Over residues 1128–1147 (AERASRAKAEKQRSDLSREL) the composition is skewed to basic and acidic residues. Ser-1162 and Ser-1237 each carry phosphoserine. Thr-1241 is subject to Phosphothreonine. Ser-1243 carries the post-translational modification Phosphoserine. Thr-1255 carries the phosphothreonine modification. Ser-1261 bears the Phosphoserine mark. A phosphothreonine mark is found at Thr-1265 and Thr-1286. Ser-1288, Ser-1292, Ser-1303, and Ser-1306 each carry phosphoserine. Position 1464 is a phosphotyrosine (Tyr-1464). Phosphothreonine is present on Thr-1467. Position 1474 is a phosphoserine (Ser-1474). Tyr-1492 is subject to Phosphotyrosine. Residue Ser-1495 is modified to Phosphoserine. Phosphothreonine is present on Thr-1501. The residue at position 1514 (Ser-1514) is a Phosphoserine. The residue at position 1517 (Thr-1517) is a Phosphothreonine. Ser-1542, Ser-1554, Ser-1574, Ser-1600, Ser-1603, Ser-1714, and Ser-1726 each carry phosphoserine. 2 positions are modified to phosphothreonine: Thr-1730 and Thr-1736. Ser-1739 carries the post-translational modification Phosphoserine.

This sequence belongs to the TRAFAC class myosin-kinesin ATPase superfamily. Myosin family. As to quaternary structure, muscle myosin is a hexameric protein that consists of 2 heavy chain subunits (MHC), 2 alkali light chain subunits (MLC) and 2 regulatory light chain subunits (MLC-2). Interacts with SLC26A5.

It is found in the cytoplasm. The protein resides in the myofibril. Its function is as follows. Required for normal hearing. It plays a role in cochlear amplification of auditory stimuli, likely through the positive regulation of prestin (SLC26A5) activity and outer hair cell (OHC) electromotility. The protein is Myosin-1 (MYH1) of Sus scrofa (Pig).